The chain runs to 318 residues: MCSGNQTSQNQTASTDFTLTGLFAESKHAALLYTVTFLLFLMALTGNALLILLIHSEPRLHTPMYFFISQLALMDLMYLCVTVPKMLVGQVTGDDTISPSGCGIQMFFHLTLAGAEVFLLAAMAYDRYAAVCRPLHYPLLMNQRVCQLLVSACWVLGMVDGLLLTPITMSFPFCQSRKILSFFCETPALLKLSCSDVSLYKMLTYLCCILMLLTPIMVISSSYTLILHLIHRMNSAAGRRKALATCSSHMIIVLLLFGASFYTYMLRSSYHTAEQDMMVSAFYTIFTPVLNPLIYSLRNKDVTRALRSMMQSRMNQEK.

At 1-30 (MCSGNQTSQNQTASTDFTLTGLFAESKHAA) the chain is on the extracellular side. Residues Asn5 and Asn10 are each glycosylated (N-linked (GlcNAc...) asparagine). A helical transmembrane segment spans residues 31–54 (LLYTVTFLLFLMALTGNALLILLI). Topologically, residues 55 to 62 (HSEPRLHT) are cytoplasmic. Residues 63–84 (PMYFFISQLALMDLMYLCVTVP) form a helical membrane-spanning segment. Residues 85-105 (KMLVGQVTGDDTISPSGCGIQ) are Extracellular-facing. A disulfide bridge connects residues Cys102 and Cys194. Residues 106–125 (MFFHLTLAGAEVFLLAAMAY) form a helical membrane-spanning segment. Over 126-144 (DRYAAVCRPLHYPLLMNQR) the chain is Cytoplasmic. Residues 145–163 (VCQLLVSACWVLGMVDGLL) form a helical membrane-spanning segment. At 164–200 (LTPITMSFPFCQSRKILSFFCETPALLKLSCSDVSLY) the chain is on the extracellular side. The helical transmembrane segment at 201 to 224 (KMLTYLCCILMLLTPIMVISSSYT) threads the bilayer. At 225–241 (LILHLIHRMNSAAGRRK) the chain is on the cytoplasmic side. A helical membrane pass occupies residues 242-264 (ALATCSSHMIIVLLLFGASFYTY). Residues 265–277 (MLRSSYHTAEQDM) are Extracellular-facing. A helical transmembrane segment spans residues 278–297 (MVSAFYTIFTPVLNPLIYSL). Topologically, residues 298–318 (RNKDVTRALRSMMQSRMNQEK) are cytoplasmic.

It belongs to the G-protein coupled receptor 1 family.

It is found in the cell membrane. Its function is as follows. Odorant receptor. In Homo sapiens (Human), this protein is Olfactory receptor 2T34 (OR2T34).